A 409-amino-acid chain; its full sequence is tRNA-specific 2-thiouridylase MnmA (409 aa).

ATP is bound by residues 40 to 47 (GLSGGVDS) and L66. C127 acts as the Nucleophile in catalysis. The cysteines at positions 127 and 237 are disulfide-linked. ATP is bound at residue G152. The disordered stretch occupies residues 156-179 (RIRHREDPEPQQALPGDSSGRHQL). An interaction with tRNA region spans residues 187-189 (KDQ). C237 (cysteine persulfide intermediate) is an active-site residue. Residues 342–343 (RY) are interaction with tRNA.

Belongs to the MnmA/TRMU family.

It is found in the cytoplasm. It catalyses the reaction S-sulfanyl-L-cysteinyl-[protein] + uridine(34) in tRNA + AH2 + ATP = 2-thiouridine(34) in tRNA + L-cysteinyl-[protein] + A + AMP + diphosphate + H(+). Functionally, catalyzes the 2-thiolation of uridine at the wobble position (U34) of tRNA, leading to the formation of s(2)U34. The protein is tRNA-specific 2-thiouridylase MnmA of Prochlorococcus marinus (strain MIT 9303).